The following is an 82-amino-acid chain: Putative membrane protein insertion efficiency factor (82 aa).

This sequence belongs to the UPF0161 family.

It localises to the cell inner membrane. Functionally, could be involved in insertion of integral membrane proteins into the membrane. This Francisella tularensis subsp. holarctica (strain LVS) protein is Putative membrane protein insertion efficiency factor.